The sequence spans 388 residues: Homoserine O-acetyltransferase (388 aa).

Residues 55 to 354 (PIVLIEHALT…PTGHDGFLIE (300 aa)) form the AB hydrolase-1 domain. The active-site Nucleophile is serine 150. Residue arginine 220 coordinates substrate. Catalysis depends on residues aspartate 318 and histidine 348. Position 349 (aspartate 349) interacts with substrate.

It belongs to the AB hydrolase superfamily. MetX family. Homodimer.

It is found in the cytoplasm. The catalysed reaction is L-homoserine + acetyl-CoA = O-acetyl-L-homoserine + CoA. It functions in the pathway amino-acid biosynthesis; L-methionine biosynthesis via de novo pathway; O-acetyl-L-homoserine from L-homoserine: step 1/1. Transfers an acetyl group from acetyl-CoA to L-homoserine, forming acetyl-L-homoserine. The sequence is that of Homoserine O-acetyltransferase from Corynebacterium urealyticum (strain ATCC 43042 / DSM 7109).